Here is a 157-residue protein sequence, read N- to C-terminus: SsrA-binding protein (157 aa).

This sequence belongs to the SmpB family.

The protein resides in the cytoplasm. In terms of biological role, required for rescue of stalled ribosomes mediated by trans-translation. Binds to transfer-messenger RNA (tmRNA), required for stable association of tmRNA with ribosomes. tmRNA and SmpB together mimic tRNA shape, replacing the anticodon stem-loop with SmpB. tmRNA is encoded by the ssrA gene; the 2 termini fold to resemble tRNA(Ala) and it encodes a 'tag peptide', a short internal open reading frame. During trans-translation Ala-aminoacylated tmRNA acts like a tRNA, entering the A-site of stalled ribosomes, displacing the stalled mRNA. The ribosome then switches to translate the ORF on the tmRNA; the nascent peptide is terminated with the 'tag peptide' encoded by the tmRNA and targeted for degradation. The ribosome is freed to recommence translation, which seems to be the essential function of trans-translation. This Chlorobium luteolum (strain DSM 273 / BCRC 81028 / 2530) (Pelodictyon luteolum) protein is SsrA-binding protein.